Here is a 149-residue protein sequence, read N- to C-terminus: Gonadotropin subunit beta-2 (149 aa).

The signal sequence occupies residues 1-24; the sequence is MARIPECTILLLLCMCVLAVPAQC. Intrachain disulfides connect Cys-30–Cys-78, Cys-44–Cys-93, Cys-47–Cys-131, Cys-55–Cys-109, Cys-59–Cys-111, and Cys-114–Cys-121. N-linked (GlcNAc...) asparagine glycosylation is present at Asn-34.

This sequence belongs to the glycoprotein hormones subunit beta family. As to quaternary structure, heterodimer of an alpha and a beta chain.

The protein localises to the secreted. Involved in gametogenesis and steroidogenesis. In Clupea pallasii (Pacific herring), this protein is Gonadotropin subunit beta-2 (cgbb).